Reading from the N-terminus, the 508-residue chain is Photosystem II CP47 reaction center protein (508 aa).

The next 6 membrane-spanning stretches (helical) occupy residues 21 to 36 (SVHI…WAGS), 101 to 115 (IMFS…IWHW), 140 to 156 (GIHL…FGAF), 203 to 218 (IAAG…FHLS), 237 to 252 (VLSS…AFIV), and 457 to 472 (TFAL…HGAR).

The protein belongs to the PsbB/PsbC family. PsbB subfamily. In terms of assembly, PSII is composed of 1 copy each of membrane proteins PsbA, PsbB, PsbC, PsbD, PsbE, PsbF, PsbH, PsbI, PsbJ, PsbK, PsbL, PsbM, PsbT, PsbX, PsbY, PsbZ, Psb30/Ycf12, at least 3 peripheral proteins of the oxygen-evolving complex and a large number of cofactors. It forms dimeric complexes. The cofactor is Binds multiple chlorophylls. PSII binds additional chlorophylls, carotenoids and specific lipids..

The protein localises to the plastid. The protein resides in the chloroplast thylakoid membrane. In terms of biological role, one of the components of the core complex of photosystem II (PSII). It binds chlorophyll and helps catalyze the primary light-induced photochemical processes of PSII. PSII is a light-driven water:plastoquinone oxidoreductase, using light energy to abstract electrons from H(2)O, generating O(2) and a proton gradient subsequently used for ATP formation. This Pinus koraiensis (Korean pine) protein is Photosystem II CP47 reaction center protein.